The following is a 591-amino-acid chain: MASKWIEEQPLVHRRDIRISSKSRIAAGLLVLLVLWRYGLPSSIHFGFSSEEPKQLGAVASEHALCSRYGADMLERGGNAADAMVATMFCIGVVGMYHSGIGGGGFMLIKSPDGDFEFVDFRETAPAAIVALGKNTSAGLRSGVPGEVRGLEYLHRKYGVLPWSVVLEPAIRTARDGFLVQEDLVNYIDMAVEETGEDFLSKHPSWAVDFSPSGSRVRLGDTMTRRRLAATLERISVDGPDAFYSGPIAEDMVASLRNVGGIMTLEDLANYTVVTRDTSHIDYRGYQITSTTAPSSGTIAMNILKVLDTYDEFFTPGTTELSTHRMIEAMKFAFGLRTRLGDPSFVHGMEEYENHILSAEMIDHIRQSISDSHTQDTSAYNPDGLEVVNSTGTAHIATVDHQGLAISATTTINRLFGNQIMCDRTGIIMNNEMDDFSVPTSSPPTFGHTPSSTNFAEPGKRPLSAISPAIILHPDGSLFLIAGSAGSNWITTTTVQNIISGIDQNLAAQEILATPRVHHQLIPNHAIFETTYDNGTVDFLSQLGHEVTWYPPAASMAHLIRVNADGGFDPAGDPRLKNSGGVVALQRRKFW.

Residues 1–41 (MASKWIEEQPLVHRRDIRISSKSRIAAGLLVLLVLWRYGLP) form the signal peptide. Arg-122 serves as a coordination point for L-glutamate. Asn-135, Asn-270, and Asn-389 each carry an N-linked (GlcNAc...) asparagine glycan. The Nucleophile role is filled by Thr-393. Residues Thr-411, Glu-432, and 464 to 465 (SA) contribute to the L-glutamate site. Asn-534 is a glycosylation site (N-linked (GlcNAc...) asparagine).

This sequence belongs to the gamma-glutamyltransferase family.

It carries out the reaction an N-terminal (5-L-glutamyl)-[peptide] + an alpha-amino acid = 5-L-glutamyl amino acid + an N-terminal L-alpha-aminoacyl-[peptide]. The catalysed reaction is glutathione + H2O = L-cysteinylglycine + L-glutamate. It catalyses the reaction an S-substituted glutathione + H2O = an S-substituted L-cysteinylglycine + L-glutamate. It functions in the pathway mycotoxin biosynthesis. In terms of biological role, gamma-glutamyltransferase; part of the gene cluster that mediates the biosynthesis of the secondary metabolite ustiloxin B, an antimitotic tetrapeptide. First, ustA is processed by the subtilisin-like endoprotease Kex2 that is outside the ustiloxin B gene cluster, at the C-terminal side of Arg-Lys, after transfer to Golgi apparatus through the endoplasmic reticulum (ER). Cleavage by KEX2 generates 16 peptides YAIG-I to YAIG-XVI. To process the precursor peptide further, at least two peptidases are necessary to cleave the N-terminal and C-terminal sides of the Tyr-Ala-Ile-Gly core peptide which serves as backbone for the synthesis of ustiloxin B, through cyclization and modification of the tyrosine with a non-protein coding amino acid, norvaline. One of the two peptidases must be the serine peptidase ustP; and the other pepdidase is probably ustH. Macrocyclization of the core peptide derived from ustA requires the tyrosinase ustQ, as well as the homologous oxidases ustYa and ustYb, and leads to the production of the first cyclization product N-desmethylustiloxin F. For the formation of N-desmethylustiloxin F, three oxidation steps are required, hydroxylation at the benzylic position, hydroxylation at either the aromatic ring of Tyr or beta-position of Ile, and oxidative cyclization. UstQ may catalyze the oxidation of a phenol moiety, whereas the ustYa and ustYb are most likely responsible for the remaining two-step oxidations. N-desmethylustiloxin F is then methylated by ustM to yield ustiloxin F which in turn substrate of the cytochrome P450 monooxygenase ustC which catalyzes the formation of S-deoxyustiloxin H. The flavoprotein monooxygenases ustF1 and ustF2 then participate in the modification of the side chain of S-deoxyustiloxin H, leading to the synthesis of an oxime intermediate, via ustiloxin H. Finally, carboxylative dehydration performed by the cysteine desulfurase-like protein ustD yields ustiloxin B. The sequence is that of Glutathione hydrolase from Aspergillus flavus (strain ATCC 200026 / FGSC A1120 / IAM 13836 / NRRL 3357 / JCM 12722 / SRRC 167).